Reading from the N-terminus, the 199-residue chain is Tegument protein UL14 homolog (199 aa).

A compositionally biased stretch (polar residues) spans 176 to 191; that stretch reads TDMNQMQPQPISKNEN. Positions 176-199 are disordered; the sequence is TDMNQMQPQPISKNENPPTPHTDV.

This sequence belongs to the alphaherpesvirinae HHV-1 UL14 protein family.

It is found in the virion tegument. It localises to the host cytoplasm. The protein resides in the host nucleus. Contributes to the nuclear transport of the viral transcriptional activator VP16 homolog during the early phase of infection. Therefore, participates indirectly in the regulation of the immediate-early gene expression. Additionally, seems to be important for efficient nuclear targeting of capsids. This chain is Tegument protein UL14 homolog, found in Varicella-zoster virus (strain Dumas) (HHV-3).